Here is a 487-residue protein sequence, read N- to C-terminus: Probable cobyric acid synthase (487 aa).

One can recognise a GATase cobBQ-type domain in the interval 246 to 431 (LVRIAVIRLP…LHGLFMVPAA (186 aa)). The Nucleophile role is filled by Cys325. The active site involves His423.

The protein belongs to the CobB/CobQ family. CobQ subfamily.

It participates in cofactor biosynthesis; adenosylcobalamin biosynthesis. Functionally, catalyzes amidations at positions B, D, E, and G on adenosylcobyrinic A,C-diamide. NH(2) groups are provided by glutamine, and one molecule of ATP is hydrogenolyzed for each amidation. This Methanosphaerula palustris (strain ATCC BAA-1556 / DSM 19958 / E1-9c) protein is Probable cobyric acid synthase.